Consider the following 778-residue polypeptide: Endonuclease MutS2 (778 aa).

Residue Gly-328–Thr-335 participates in ATP binding. The region spanning Leu-702–Lys-777 is the Smr domain.

The protein belongs to the DNA mismatch repair MutS family. MutS2 subfamily. Homodimer. Binds to stalled ribosomes, contacting rRNA.

Its function is as follows. Endonuclease that is involved in the suppression of homologous recombination and thus may have a key role in the control of bacterial genetic diversity. In terms of biological role, acts as a ribosome collision sensor, splitting the ribosome into its 2 subunits. Detects stalled/collided 70S ribosomes which it binds and splits by an ATP-hydrolysis driven conformational change. Acts upstream of the ribosome quality control system (RQC), a ribosome-associated complex that mediates the extraction of incompletely synthesized nascent chains from stalled ribosomes and their subsequent degradation. Probably generates substrates for RQC. The polypeptide is Endonuclease MutS2 (Streptococcus pneumoniae (strain CGSP14)).